The following is a 120-amino-acid chain: Seripauperin-6 (120 aa).

Residues 1 to 20 form the signal peptide; sequence MVKLTSIAAGVAAIAATASA.

The protein belongs to the SRP1/TIP1 family. Seripauperin subfamily.

This chain is Seripauperin-6 (PAU6), found in Saccharomyces cerevisiae (strain ATCC 204508 / S288c) (Baker's yeast).